Here is a 555-residue protein sequence, read N- to C-terminus: Urocanate hydratase (555 aa).

NAD(+) contacts are provided by residues 52-53 (GG), glutamine 130, 176-178 (GMG), glutamate 196, arginine 201, 242-243 (NA), 263-267 (QTSAH), 273-274 (YL), and tyrosine 322. Cysteine 410 is an active-site residue. Position 492 (glycine 492) interacts with NAD(+).

It belongs to the urocanase family. Requires NAD(+) as cofactor.

The protein localises to the cytoplasm. It catalyses the reaction 4-imidazolone-5-propanoate = trans-urocanate + H2O. Its pathway is amino-acid degradation; L-histidine degradation into L-glutamate; N-formimidoyl-L-glutamate from L-histidine: step 2/3. In terms of biological role, catalyzes the conversion of urocanate to 4-imidazolone-5-propionate. The protein is Urocanate hydratase of Shewanella baltica (strain OS185).